The sequence spans 161 residues: Probable chemoreceptor glutamine deamidase CheD (161 aa).

The protein belongs to the CheD family.

It carries out the reaction L-glutaminyl-[protein] + H2O = L-glutamyl-[protein] + NH4(+). Its function is as follows. Probably deamidates glutamine residues to glutamate on methyl-accepting chemotaxis receptors (MCPs), playing an important role in chemotaxis. This is Probable chemoreceptor glutamine deamidase CheD from Trichlorobacter lovleyi (strain ATCC BAA-1151 / DSM 17278 / SZ) (Geobacter lovleyi).